Consider the following 1254-residue polypeptide: AF4/FMR2 family member 3 (1254 aa).

The span at 45–62 shows a compositional bias: basic and acidic residues; sequence YEPDRNALRRKERERRSQ. Disordered regions lie at residues 45 to 90, 139 to 190, 261 to 324, 350 to 534, and 552 to 752; these read YEPD…GDEL, AESR…AAQQ, RPMD…GENN, EPSK…EGQD, and KTTC…SVGS. Polar residues-rich tracts occupy residues 67–76 and 143–158; these read DSGSFNSGYS and AQPQ…SSTP. Positions 359-369 are enriched in polar residues; it reads KDSQLVSSGHS. The segment covering 406-418 has biased composition (low complexity); sequence QQAAQRTALRALA. Positions 421-433 are enriched in polar residues; the sequence is SVVQQTNCRGSAP. Residues 441–472 are compositionally biased toward low complexity; the sequence is SSSSGGSSSSSDSESTSGSDSETESSSSSSES. The span at 552–561 shows a compositional bias: basic and acidic residues; the sequence is KTTCKEEQRP. The segment covering 577 to 605 has biased composition (low complexity); sequence SPPAAVAVTAAALPPAVPSAPTESAPAPT. A compositionally biased stretch (basic and acidic residues) spans 615–633; it reads RRTERTSAGDGANCHRPEE. Low complexity-rich tracts occupy residues 694–704 and 732–749; these read TESSSSSSSSD and AASS…SRAS. Position 782 is a phosphoserine (Ser-782). The segment at 813 to 883 is disordered; it reads PGVLSAPSAK…ASTNNTLSGN (71 aa). Positions 857 to 869 are enriched in basic and acidic residues; the sequence is REIKKVQGRKESA. Polar residues predominate over residues 873 to 883; it reads AASTNNTLSGN. The residue at position 908 (Ser-908) is a Phosphoserine. Disordered regions lie at residues 919-991 and 1128-1171; these read ASED…HRDC and AAQA…SGLS. 2 stretches are compositionally biased toward polar residues: residues 922–941 and 960–985; these read DLTS…ASSN and ASHN…SPGS. Composition is skewed to low complexity over residues 1132-1146 and 1154-1171; these read PSPW…GSPS and PASS…SGLS.

Belongs to the AF4 family. Highest levels found in lymphoid tissues, lower levels in brain and lung.

The protein resides in the nucleus. Putative transcription activator that may function in lymphoid development and oncogenesis. The sequence is that of AF4/FMR2 family member 3 (Aff3) from Mus musculus (Mouse).